Consider the following 126-residue polypeptide: Aspartate 1-decarboxylase (126 aa).

Serine 25 functions as the Schiff-base intermediate with substrate; via pyruvic acid in the catalytic mechanism. A Pyruvic acid (Ser) modification is found at serine 25. Threonine 57 is a substrate binding site. The active-site Proton donor is tyrosine 58. 73–75 (GAA) is a binding site for substrate.

The protein belongs to the PanD family. As to quaternary structure, heterooctamer of four alpha and four beta subunits. Pyruvate serves as cofactor. Is synthesized initially as an inactive proenzyme, which is activated by self-cleavage at a specific serine bond to produce a beta-subunit with a hydroxyl group at its C-terminus and an alpha-subunit with a pyruvoyl group at its N-terminus.

It localises to the cytoplasm. The catalysed reaction is L-aspartate + H(+) = beta-alanine + CO2. The protein operates within cofactor biosynthesis; (R)-pantothenate biosynthesis; beta-alanine from L-aspartate: step 1/1. Functionally, catalyzes the pyruvoyl-dependent decarboxylation of aspartate to produce beta-alanine. This is Aspartate 1-decarboxylase from Psychrobacter sp. (strain PRwf-1).